The primary structure comprises 187 residues: Orotate phosphoribosyltransferase (187 aa).

110-118 (EDVVTTGGS) is a binding site for 5-phospho-alpha-D-ribose 1-diphosphate. Orotate contacts are provided by threonine 114 and arginine 142.

It belongs to the purine/pyrimidine phosphoribosyltransferase family. PyrE subfamily. In terms of assembly, homodimer. Mg(2+) serves as cofactor.

The catalysed reaction is orotidine 5'-phosphate + diphosphate = orotate + 5-phospho-alpha-D-ribose 1-diphosphate. The protein operates within pyrimidine metabolism; UMP biosynthesis via de novo pathway; UMP from orotate: step 1/2. Its function is as follows. Catalyzes the transfer of a ribosyl phosphate group from 5-phosphoribose 1-diphosphate to orotate, leading to the formation of orotidine monophosphate (OMP). This is Orotate phosphoribosyltransferase from Thermotoga maritima (strain ATCC 43589 / DSM 3109 / JCM 10099 / NBRC 100826 / MSB8).